We begin with the raw amino-acid sequence, 420 residues long: 3-isopropylmalate dehydratase large subunit (420 aa).

[4Fe-4S] cluster-binding residues include Cys-301, Cys-361, and Cys-364.

This sequence belongs to the aconitase/IPM isomerase family. LeuC type 2 subfamily. In terms of assembly, heterodimer of LeuC and LeuD. [4Fe-4S] cluster serves as cofactor.

The enzyme catalyses (2R,3S)-3-isopropylmalate = (2S)-2-isopropylmalate. It participates in amino-acid biosynthesis; L-leucine biosynthesis; L-leucine from 3-methyl-2-oxobutanoate: step 2/4. Catalyzes the isomerization between 2-isopropylmalate and 3-isopropylmalate, via the formation of 2-isopropylmaleate. In Desulfovibrio desulfuricans (strain ATCC 27774 / DSM 6949 / MB), this protein is 3-isopropylmalate dehydratase large subunit.